Consider the following 94-residue polypeptide: Large ribosomal subunit protein uL29 (94 aa).

A disordered region spans residues 65–94 (ANPGERKSRVFSRAKRKKKNLARLSAKAKG). Basic residues predominate over residues 73 to 94 (RVFSRAKRKKKNLARLSAKAKG).

Belongs to the universal ribosomal protein uL29 family.

The sequence is that of Large ribosomal subunit protein uL29 from Leptospira interrogans serogroup Icterohaemorrhagiae serovar copenhageni (strain Fiocruz L1-130).